The sequence spans 203 residues: Probable nicotinate-nucleotide adenylyltransferase (203 aa).

Belongs to the NadD family.

The catalysed reaction is nicotinate beta-D-ribonucleotide + ATP + H(+) = deamido-NAD(+) + diphosphate. It participates in cofactor biosynthesis; NAD(+) biosynthesis; deamido-NAD(+) from nicotinate D-ribonucleotide: step 1/1. Catalyzes the reversible adenylation of nicotinate mononucleotide (NaMN) to nicotinic acid adenine dinucleotide (NaAD). The chain is Probable nicotinate-nucleotide adenylyltransferase from Clostridium kluyveri (strain ATCC 8527 / DSM 555 / NBRC 12016 / NCIMB 10680 / K1).